We begin with the raw amino-acid sequence, 51 residues long: Large ribosomal subunit protein eL39 (51 aa).

Belongs to the eukaryotic ribosomal protein eL39 family. In terms of assembly, interacts with IMPACT.

The protein is Large ribosomal subunit protein eL39 (RPL39) of Gallus gallus (Chicken).